Consider the following 145-residue polypeptide: uncharacterized protein (145 aa).

Residues Y95–T119 form a disordered region.

This is an uncharacterized protein from Treponema pallidum (strain Nichols).